Reading from the N-terminus, the 659-residue chain is Biosynthetic arginine decarboxylase 2 (659 aa).

K119 carries the N6-(pyridoxal phosphate)lysine modification. 311 to 321 (LNVGGGLAVDY) contacts substrate.

The protein belongs to the Orn/Lys/Arg decarboxylase class-II family. SpeA subfamily. Mg(2+) serves as cofactor. It depends on pyridoxal 5'-phosphate as a cofactor.

The enzyme catalyses L-arginine + H(+) = agmatine + CO2. In terms of biological role, catalyzes the biosynthesis of agmatine from arginine. This Synechocystis sp. (strain ATCC 27184 / PCC 6803 / Kazusa) protein is Biosynthetic arginine decarboxylase 2 (speA2).